We begin with the raw amino-acid sequence, 115 residues long: C-C motif chemokine 6 (115 aa).

The first 21 residues, Met-1–Ala-21, serve as a signal peptide directing secretion. Disulfide bonds link Cys-49–Cys-72, Cys-50–Cys-88, and Cys-59–Cys-99.

Belongs to the intercrine beta (chemokine CC) family.

Its subcellular location is the secreted. This chain is C-C motif chemokine 6 (Ccl6), found in Rattus norvegicus (Rat).